Reading from the N-terminus, the 376-residue chain is Chaperone protein DnaJ (376 aa).

Residues D5–G70 form the J domain. The CR-type zinc-finger motif lies at G136 to T214. Zn(2+) contacts are provided by C149, C152, C166, C169, C188, C191, C202, and C205. CXXCXGXG motif repeat units lie at residues C149–G156, C166–G173, C188–G195, and C202–G209.

It belongs to the DnaJ family. As to quaternary structure, homodimer. It depends on Zn(2+) as a cofactor.

The protein localises to the cytoplasm. In terms of biological role, participates actively in the response to hyperosmotic and heat shock by preventing the aggregation of stress-denatured proteins and by disaggregating proteins, also in an autonomous, DnaK-independent fashion. Unfolded proteins bind initially to DnaJ; upon interaction with the DnaJ-bound protein, DnaK hydrolyzes its bound ATP, resulting in the formation of a stable complex. GrpE releases ADP from DnaK; ATP binding to DnaK triggers the release of the substrate protein, thus completing the reaction cycle. Several rounds of ATP-dependent interactions between DnaJ, DnaK and GrpE are required for fully efficient folding. Also involved, together with DnaK and GrpE, in the DNA replication of plasmids through activation of initiation proteins. The protein is Chaperone protein DnaJ of Burkholderia multivorans (strain ATCC 17616 / 249).